The chain runs to 635 residues: Phosphatidylserine decarboxylase proenzyme 2 (635 aa).

A C2 domain is found at 20–146 (KLQKFRIHRR…VVQEPESTCK (127 aa)). 2 EF-hand domains span residues 174–209 (TERR…FGNL) and 210–245 (VAAN…QQEQ). Asp-187, Asn-189, Asp-191, Gln-193, Glu-198, Asp-223, Asn-225, Asp-227, and Glu-234 together coordinate Ca(2+). Active-site charge relay system; for autoendoproteolytic cleavage activity residues include Asp-443, His-499, and Ser-587. Residue Ser-587 is the Schiff-base intermediate with substrate; via pyruvic acid; for decarboxylase activity of the active site. Pyruvic acid (Ser); by autocatalysis is present on Ser-587.

This sequence belongs to the phosphatidylserine decarboxylase family. PSD-B subfamily. Eukaryotic type II sub-subfamily. Heterodimer of a large membrane-associated beta subunit and a small pyruvoyl-containing alpha subunit. Pyruvate serves as cofactor. In terms of processing, is synthesized initially as an inactive proenzyme. Formation of the active enzyme involves a self-maturation process in which the active site pyruvoyl group is generated from an internal serine residue via an autocatalytic post-translational modification. Two non-identical subunits are generated from the proenzyme in this reaction, and the pyruvate is formed at the N-terminus of the alpha chain, which is derived from the carboxyl end of the proenzyme. The autoendoproteolytic cleavage occurs by a canonical serine protease mechanism, in which the side chain hydroxyl group of the serine supplies its oxygen atom to form the C-terminus of the beta chain, while the remainder of the serine residue undergoes an oxidative deamination to produce ammonia and the pyruvoyl prosthetic group on the alpha chain. During this reaction, the Ser that is part of the protease active site of the proenzyme becomes the pyruvoyl prosthetic group, which constitutes an essential element of the active site of the mature decarboxylase. Highly expressed in flowers and at lower levels in leaves.

The protein resides in the vacuole membrane. It catalyses the reaction a 1,2-diacyl-sn-glycero-3-phospho-L-serine + H(+) = a 1,2-diacyl-sn-glycero-3-phosphoethanolamine + CO2. It participates in phospholipid metabolism; phosphatidylethanolamine biosynthesis; phosphatidylethanolamine from CDP-diacylglycerol: step 2/2. In terms of biological role, catalyzes the formation of phosphatidylethanolamine (PtdEtn) from phosphatidylserine (PtdSer). Plays a central role in phospholipid metabolism and in the interorganelle trafficking of phosphatidylserine. Contributes only to a minor proportion of PtdEtn production. The polypeptide is Phosphatidylserine decarboxylase proenzyme 2 (PSD2) (Arabidopsis thaliana (Mouse-ear cress)).